A 588-amino-acid polypeptide reads, in one-letter code: Sulfite reductase [NADPH] hemoprotein beta-component (588 aa).

Over residues 1 to 10 (MSDKKQKGLE) the composition is skewed to basic and acidic residues. Residues 1–20 (MSDKKQKGLEWQDNPLSDNE) are disordered. Residues Cys443, Cys449, Cys488, and Cys492 each coordinate [4Fe-4S] cluster. Cys492 is a binding site for siroheme.

Belongs to the nitrite and sulfite reductase 4Fe-4S domain family. As to quaternary structure, alpha(8)-beta(8). The alpha component is a flavoprotein, the beta component is a hemoprotein. Siroheme is required as a cofactor. Requires [4Fe-4S] cluster as cofactor.

The catalysed reaction is hydrogen sulfide + 3 NADP(+) + 3 H2O = sulfite + 3 NADPH + 4 H(+). It functions in the pathway sulfur metabolism; hydrogen sulfide biosynthesis; hydrogen sulfide from sulfite (NADPH route): step 1/1. Its function is as follows. Component of the sulfite reductase complex that catalyzes the 6-electron reduction of sulfite to sulfide. This is one of several activities required for the biosynthesis of L-cysteine from sulfate. The chain is Sulfite reductase [NADPH] hemoprotein beta-component from Mannheimia succiniciproducens (strain KCTC 0769BP / MBEL55E).